We begin with the raw amino-acid sequence, 354 residues long: Histidinol-phosphate aminotransferase 1 (354 aa).

Lysine 209 carries the post-translational modification N6-(pyridoxal phosphate)lysine.

It belongs to the class-II pyridoxal-phosphate-dependent aminotransferase family. Histidinol-phosphate aminotransferase subfamily. Homodimer. Pyridoxal 5'-phosphate serves as cofactor.

The catalysed reaction is L-histidinol phosphate + 2-oxoglutarate = 3-(imidazol-4-yl)-2-oxopropyl phosphate + L-glutamate. It participates in amino-acid biosynthesis; L-histidine biosynthesis; L-histidine from 5-phospho-alpha-D-ribose 1-diphosphate: step 7/9. In Oceanobacillus iheyensis (strain DSM 14371 / CIP 107618 / JCM 11309 / KCTC 3954 / HTE831), this protein is Histidinol-phosphate aminotransferase 1 (hisC1).